The chain runs to 424 residues: UPF0229 protein Sde_0732 (424 aa).

Residues 52 to 109 (IGIPSKDISEPVFHHDSGGVDTRVLPGNDQFHSGDRIQRPPSGQGGGGSGKGASDSGE) are disordered. Residues 58–69 (DISEPVFHHDSG) are compositionally biased toward basic and acidic residues.

This sequence belongs to the UPF0229 family.

The protein is UPF0229 protein Sde_0732 of Saccharophagus degradans (strain 2-40 / ATCC 43961 / DSM 17024).